A 332-amino-acid chain; its full sequence is Protoheme IX farnesyltransferase (332 aa).

Transmembrane regions (helical) follow at residues 63 to 83, 109 to 129, 132 to 152, 160 to 180, 188 to 208, 245 to 265, and 286 to 306; these read LICT…LNCL, TVFL…ISGV, LAAG…TIIL, IVFG…AATG, WLFS…AILL, ILGV…LLPF, and AKGL…LLLI.

Belongs to the UbiA prenyltransferase family. Protoheme IX farnesyltransferase subfamily.

It localises to the cell inner membrane. The catalysed reaction is heme b + (2E,6E)-farnesyl diphosphate + H2O = Fe(II)-heme o + diphosphate. It functions in the pathway porphyrin-containing compound metabolism; heme O biosynthesis; heme O from protoheme: step 1/1. In terms of biological role, converts heme B (protoheme IX) to heme O by substitution of the vinyl group on carbon 2 of heme B porphyrin ring with a hydroxyethyl farnesyl side group. The polypeptide is Protoheme IX farnesyltransferase (Prochlorococcus marinus subsp. pastoris (strain CCMP1986 / NIES-2087 / MED4)).